We begin with the raw amino-acid sequence, 267 residues long: DCN1-like protein 2 (267 aa).

The interval 1 to 48 (MTRKYTKKSSGSTASTTNSTAEIVDLTTSTSSVGKKRKSPDEKAQPIT) is disordered. Low complexity predominate over residues 8-21 (KSSGSTASTTNSTA). The 188-residue stretch at 75–262 (HYTYLYTYIF…LLDQFSEWVQ (188 aa)) folds into the DCUN1 domain.

This is DCN1-like protein 2 from Dictyostelium discoideum (Social amoeba).